Consider the following 32-residue polypeptide: Tail virion protein G9P (32 aa).

The chain crosses the membrane as a helical span at residues 8 to 24 (FASFVLGWCLRSGITYF).

It belongs to the inovirus G9P protein family.

It is found in the virion. The protein localises to the host membrane. May initiate with G7P the virion concomitant assembly-budding process, by interacting with the packaging signal of the viral genome. The assembly-budding takes place at the host inner membrane. In turn, G7P and G9P are present at the end of the filamentous virion that emerges first from the bacterial host. In Escherichia coli (Bacteriophage f1), this protein is Tail virion protein G9P (IX).